The sequence spans 267 residues: Alkaline ceramidase 3 (267 aa).

Residues 1 to 33 (MAPAVDRKGYWGPTTSTLDWCEENYVVTLFVAE) are Cytoplasmic-facing. Ca(2+)-binding residues include Asp-19, Trp-20, Glu-22, Asn-24, and Glu-33. Residues 34 to 55 (FWNTVSNLIMIIPPIFGAIQGI) form a helical membrane-spanning segment. Residues 56 to 61 (RDRLEK) lie on the Lumenal side of the membrane. Residues 62 to 82 (RYIAAYLALTVVGMGSWCFHM) traverse the membrane as a helical segment. His-81 contacts Zn(2+). At 83 to 87 (TLKYE) the chain is on the cytoplasmic side. Residues 88–108 (MQLLDELPMIYSCCIFVYCMF) traverse the membrane as a helical segment. The Lumenal portion of the chain corresponds to 109-118 (ECFKTKSSIN). Residues 119-139 (YHLLFTLFLYSLTVTTIYLKV) traverse the membrane as a helical segment. At 140–141 (KE) the chain is on the cytoplasmic side. Residues 142–162 (PIFHQVMYGMLVFTLVLRSIY) form a helical membrane-spanning segment. The Lumenal portion of the chain corresponds to 163 to 173 (IVTWVYPWLRG). A helical membrane pass occupies residues 174 to 194 (LGYTSLTVFLLGFLLWNIDNI). The Cytoplasmic segment spans residues 195–215 (FCDSLRNFRKRVPPVLGVTTQ). Residues 216–236 (FHAWWHILTGLGSYLHILFSL) traverse the membrane as a helical segment. Zn(2+) contacts are provided by His-217 and His-221. The Lumenal segment spans residues 237-267 (YTRTLYLRYRPKVKFLFGIWPAVMFEPQRKH).

Belongs to the alkaline ceramidase family. The cofactor is Zn(2+). As to expression, up-regulated with age in cerebeLlum and cerebrum.

It is found in the endoplasmic reticulum membrane. The protein localises to the golgi apparatus membrane. It carries out the reaction an N-acyl-(4R)-4-hydroxysphinganine + H2O = (4R)-hydroxysphinganine + a fatty acid. It catalyses the reaction N-(5Z,8Z,11Z,14Z-eicosatetraenoyl)-sphing-4-enine + H2O = sphing-4-enine + (5Z,8Z,11Z,14Z)-eicosatetraenoate. The enzyme catalyses N-(5Z,8Z,11Z,14Z-eicosatetraenoyl)-sphinganine + H2O = sphinganine + (5Z,8Z,11Z,14Z)-eicosatetraenoate. The catalysed reaction is N-(5Z,8Z,11Z,14Z-eicosatetraenoyl)-(4R)-hydroxysphinganine + H2O = (4R)-hydroxysphinganine + (5Z,8Z,11Z,14Z)-eicosatetraenoate. It carries out the reaction N-(11Z-eicosenoyl)-sphing-4-enine + H2O = (11Z)-eicosenoate + sphing-4-enine. It catalyses the reaction N-(11Z-eicosenoyl)-sphinganine + H2O = (11Z)-eicosenoate + sphinganine. The enzyme catalyses N-(11Z-eicosenoyl)-(4R)-hydroxysphinganine + H2O = (11Z)-eicosenoate + (4R)-hydroxysphinganine. The catalysed reaction is N-(9Z-octadecenoyl)-sphing-4-enine + H2O = sphing-4-enine + (9Z)-octadecenoate. It carries out the reaction N-(9Z-octadecenoyl)-sphinganine + H2O = sphinganine + (9Z)-octadecenoate. It catalyses the reaction N-(9Z-octadecenoyl)-(4R)-hydroxysphinganine + H2O = (4R)-hydroxysphinganine + (9Z)-octadecenoate. The enzyme catalyses an N-acylsphing-4-enine + H2O = sphing-4-enine + a fatty acid. The catalysed reaction is an N-acylsphinganine + H2O = sphinganine + a fatty acid. Its pathway is lipid metabolism; sphingolipid metabolism. Its activity is regulated as follows. Activated by Ca(2+) and inhibited by Zn(2+). Its function is as follows. Endoplasmic reticulum and Golgi ceramidase that catalyzes the hydrolysis of unsaturated long-chain C18:1-, C20:1- and C20:4-ceramides, dihydroceramides and phytoceramides into sphingoid bases like sphingosine and free fatty acids at alkaline pH. Ceramides, sphingosine, and its phosphorylated form sphingosine-1-phosphate are bioactive lipids that mediate cellular signaling pathways regulating several biological processes including cell proliferation, apoptosis and differentiation. Controls the generation of sphingosine in erythrocytes, and thereby sphingosine-1-phosphate in plasma. Through the regulation of ceramides and sphingosine-1-phosphate homeostasis in the brain may play a role in neurons survival and function. By regulating the levels of pro-inflammatory ceramides in immune cells and tissues, may modulate the inflammatory response. This chain is Alkaline ceramidase 3 (Acer3), found in Mus musculus (Mouse).